We begin with the raw amino-acid sequence, 286 residues long: MQAEFKLRSKILLQPLVLLHIIDAYERRPKDCTQVIGTLLGRNNPESGHLEISNCFTLLHKDYPNSDRIDVDLQYANDMYELNQLTYPQEKIIGWYATGKEVSRSAVNLHEYYARECADGNPMHLLIDTSLRGQRMMMRLYTAVVMGVPNGTKGLMFSLLPVEMSSGNPESVALNLMKKNALQPTKQVGRILPELVQVVDITRDLQTKLDLVLRYVNETLARKRTPNNTVGRALHDALTSVPLVDAESFRMMFNANVRDMLMSITLATMIKAQLKISESVIAMPDL.

In terms of domain architecture, MPN spans 11 to 147 (ILLQPLVLLH…MRLYTAVVMG (137 aa)).

Belongs to the eIF-3 subunit F family. As to quaternary structure, component of the eukaryotic translation initiation factor 3 (eIF-3) complex. The eIF-3 complex interacts with pix.

It localises to the cytoplasm. Component of the eukaryotic translation initiation factor 3 (eIF-3) complex, which is involved in protein synthesis of a specialized repertoire of mRNAs and, together with other initiation factors, stimulates binding of mRNA and methionyl-tRNAi to the 40S ribosome. The eIF-3 complex specifically targets and initiates translation of a subset of mRNAs involved in cell proliferation. This is Eukaryotic translation initiation factor 3 subunit F-2 from Drosophila willistoni (Fruit fly).